The sequence spans 103 residues: Protein translation factor SUI1 homolog (103 aa).

It belongs to the SUI1 family.

This chain is Protein translation factor SUI1 homolog, found in Methanocaldococcus jannaschii (strain ATCC 43067 / DSM 2661 / JAL-1 / JCM 10045 / NBRC 100440) (Methanococcus jannaschii).